The primary structure comprises 351 residues: Probable E3 ubiquitin-protein ligase sinah (351 aa).

Residues 1 to 38 (MSVRNSRPQLSWPERVSPQRTIDTPTASGEMLTRRQSA) are disordered. Over residues 18–27 (PQRTIDTPTA) the composition is skewed to polar residues. The segment at 106–141 (CPVCFGYIMPPIMQCPRGHLICSTCRSKLTICPVCR) adopts an RING-type zinc-finger fold. The interval 155 to 346 (VASKLIFPCK…LALNVVIRKV (192 aa)) is SBD. Residues 158-218 (KLIFPCKHSH…VYQHLMSSHE (61 aa)) form an SIAH-type zinc finger. Positions 163, 170, 182, 186, 193, 200, 212, and 217 each coordinate Zn(2+).

It belongs to the SINA (Seven in absentia) family. In terms of assembly, interacts with ebi and phyl.

It carries out the reaction S-ubiquitinyl-[E2 ubiquitin-conjugating enzyme]-L-cysteine + [acceptor protein]-L-lysine = [E2 ubiquitin-conjugating enzyme]-L-cysteine + N(6)-ubiquitinyl-[acceptor protein]-L-lysine.. Its pathway is protein modification; protein ubiquitination. Its function is as follows. E3 ubiquitin-protein ligase that mediates ubiquitination and subsequent proteasomal degradation of target proteins. The adapter phyl is required to direct the degradation of the two isoforms of the transcriptional repressor Tramtrack (Ttk). E3 ubiquitin ligases accept ubiquitin from an E2 ubiquitin-conjugating enzyme in the form of a thioester and then directly transfers the ubiquitin to targeted substrates. It probably triggers the ubiquitin-mediated degradation of different substrates. A phyl-independent mechanism of degradation exists for isoform beta of ttk that involves motifs in the C-terminus of ttk. The chain is Probable E3 ubiquitin-protein ligase sinah (sinah) from Drosophila melanogaster (Fruit fly).